Reading from the N-terminus, the 71-residue chain is Large ribosomal subunit protein bL32c (71 aa).

The segment at 1 to 24 is disordered; the sequence is MAVPKKRTSRSKKKIRKNVRKGKK.

This sequence belongs to the bacterial ribosomal protein bL32 family.

It is found in the plastid. It localises to the chloroplast. The protein is Large ribosomal subunit protein bL32c of Pinus koraiensis (Korean pine).